The chain runs to 1380 residues: Hepatocyte growth factor receptor (1380 aa).

Residues 1 to 24 (MKAPAALAPGILVLLLTLVQKGGG) form the signal peptide. Topologically, residues 25 to 931 (ECREALAKSE…VIVQPDQNFT (907 aa)) are extracellular. Residues 27 to 513 (REALAKSEMN…TGKKITKIPL (487 aa)) form the Sema domain. Asn-45 is a glycosylation site (N-linked (GlcNAc...) asparagine). 4 disulfides stabilise this stretch: Cys-95–Cys-101, Cys-98–Cys-156, Cys-129–Cys-137, and Cys-170–Cys-173. Asn-200 carries N-linked (GlcNAc...) asparagine glycosylation. 2 disulfides stabilise this stretch: Cys-296/Cys-361 and Cys-383/Cys-395. N-linked (GlcNAc...) asparagine glycosylation is found at Asn-397 and Asn-403. Intrachain disulfides connect Cys-518-Cys-536, Cys-524-Cys-559, Cys-527-Cys-543, and Cys-539-Cys-549. Residue Asn-551 is glycosylated (N-linked (GlcNAc...) asparagine). IPT/TIG domains follow at residues 561–654 (PTIY…FSYV), 656–738 (PEIT…FSYQ), and 741–835 (PLVV…LIYV). Thr-580 carries O-linked (Man) threonine glycosylation. Asn-592, Asn-605, and Asn-633 each carry an N-linked (GlcNAc...) asparagine glycan. Residues Thr-675 and Thr-760 are each glycosylated (O-linked (Man) threonine). Asn-784, Asn-878, and Asn-929 each carry an N-linked (GlcNAc...) asparagine glycan. The helical transmembrane segment at 932–954 (GLIVGVVSISVILLSSLGLFLWL) threads the bilayer. Residues 955–1380 (KKRKQIKDLG…HDTVDGEVDT (426 aa)) are Cytoplasmic-facing. The residue at position 965 (Ser-965) is a Phosphoserine. At Thr-976 the chain carries Phosphothreonine. A phosphoserine mark is found at Ser-989, Ser-996, and Ser-999. Position 1002 is a phosphotyrosine (Tyr-1002). A Protein kinase domain is found at 1077–1344 (VHFNEVIGRG…RISAIFSTFI (268 aa)). ATP is bound by residues 1083 to 1091 (IGRGHFGCV) and Lys-1109. Asp-1203 serves as the catalytic Proton acceptor. Residues 1211 to 1380 (LDGKFTVKVA…HDTVDGEVDT (170 aa)) are interaction with RANBP9. The residue at position 1229 (Tyr-1229) is a Phosphotyrosine. 2 positions are modified to phosphotyrosine; by autocatalysis: Tyr-1233 and Tyr-1234. Thr-1288 carries the phosphothreonine modification. The segment at 1319–1358 (WHPKAEMRPSFTELVSRISAIFSTFIGEHYVHVNATYVNV) is interaction with MUC20. 2 positions are modified to phosphotyrosine; by autocatalysis: Tyr-1348 and Tyr-1355. Tyr-1364 is modified (phosphotyrosine).

This sequence belongs to the protein kinase superfamily. Tyr protein kinase family. As to quaternary structure, heterodimer made of an alpha chain (50 kDa) and a beta chain (145 kDa) which are disulfide linked. Binds PLXNB1. Interacts when phosphorylated with downstream effectors including STAT3, PIK3R1, SRC, PCLG1, GRB2 and GAB1. Interacts with SPSB1, SPSB2 and SPSB4. Interacts with INPP5D/SHIP1. When phosphorylated at Tyr-1355, interacts with INPPL1/SHIP2. Interacts with RANBP9 and RANBP10, as well as SPSB1, SPSB2, SPSB3 and SPSB4. SPSB1 binding occurs in the presence and in the absence of HGF, however HGF treatment has a positive effect on this interaction. Interacts with MUC20; prevents interaction with GRB2 and suppresses hepatocyte growth factor-induced cell proliferation. Interacts with GRB10. Interacts with PTPN1 and PTPN2. Interacts with HSP90AA1 and HSP90AB1; the interaction suppresses MET kinase activity. Interacts with tensin TNS3. Interacts (when phosphorylated) with tensin TNS4 (via SH2 domain); the interaction increases MET protein stability by inhibiting MET endocytosis and subsequent lysosomal degradation. Autophosphorylated in response to ligand binding on Tyr-1233 and Tyr-1234 in the kinase domain leading to further phosphorylation of Tyr-1348 and Tyr-1355 in the C-terminal multifunctional docking site. Dephosphorylated by PTPRJ at Tyr-1348 and Tyr-1364. Dephosphorylated by PTPN1 and PTPN2. Post-translationally, ubiquitinated. Ubiquitination by CBL regulates the receptor stability and activity through proteasomal degradation. In terms of processing, O-mannosylation of IPT/TIG domains by TMEM260 is required for protein maturation. O-mannosylated residues are composed of single mannose glycans that are not elongated or modified.

Its subcellular location is the membrane. It carries out the reaction L-tyrosyl-[protein] + ATP = O-phospho-L-tyrosyl-[protein] + ADP + H(+). Its activity is regulated as follows. In its inactive state, the C-terminal tail interacts with the catalytic domain and inhibits the kinase activity. Upon ligand binding, the C-terminal tail is displaced and becomes phosphorylated, thus increasing the kinase activity. In terms of biological role, receptor tyrosine kinase that transduces signals from the extracellular matrix into the cytoplasm by binding to hepatocyte growth factor/HGF ligand. Regulates many physiological processes including proliferation, scattering, morphogenesis and survival. Ligand binding at the cell surface induces autophosphorylation of MET on its intracellular domain that provides docking sites for downstream signaling molecules. Following activation by ligand, interacts with the PI3-kinase subunit PIK3R1, PLCG1, SRC, GRB2, STAT3 or the adapter GAB1. Recruitment of these downstream effectors by MET leads to the activation of several signaling cascades including the RAS-ERK, PI3 kinase-AKT, or PLCgamma-PKC. The RAS-ERK activation is associated with the morphogenetic effects while PI3K/AKT coordinates prosurvival effects. During embryonic development, MET signaling plays a role in gastrulation, development and migration of muscles and neuronal precursors, angiogenesis and kidney formation. In adults, participates in wound healing as well as organ regeneration and tissue remodeling. Also promotes differentiation and proliferation of hematopoietic cells. This is Hepatocyte growth factor receptor (MET) from Echinops telfairi (Lesser hedgehog tenrec).